We begin with the raw amino-acid sequence, 295 residues long: Tissue factor (295 aa).

Residues 1–28 (MAIPMRPRLLAALAPTFLGFLLLQVAVG) form the signal peptide. At 29 to 252 (AGTPPGKAFN…TEQWKSVLGE (224 aa)) the chain is on the extracellular side. Asn38 and Asn58 each carry an N-linked (GlcNAc...) asparagine glycan. Cys76 and Cys84 are joined by a disulfide. 4 N-linked (GlcNAc...) asparagine glycosylation sites follow: Asn95, Asn109, Asn170, and Asn201. The cysteines at positions 219 and 242 are disulfide-linked. The short motif at 246-248 (WKS) is the WKS motif element. The helical transmembrane segment at 253–275 (TLIIVGAVVFLVTVFIILLTISL) threads the bilayer. Cys276 carries the S-palmitoyl cysteine lipid modification. The Cytoplasmic segment spans residues 276-295 (CKRRKNRAGQKRKNTPSRLA).

It belongs to the tissue factor family. As to quaternary structure, interacts with HSPE; the interaction, inhibited by heparin, promotes the generation of activated factor X and activates coagulation in the presence of activated factor VII.

It is found in the membrane. Functionally, initiates blood coagulation by forming a complex with circulating factor VII or VIIa. The [TF:VIIa] complex activates factors IX or X by specific limited proteolysis. TF plays a role in normal hemostasis by initiating the cell-surface assembly and propagation of the coagulation protease cascade. This Rattus norvegicus (Rat) protein is Tissue factor (F3).